We begin with the raw amino-acid sequence, 68 residues long: Large ribosomal subunit protein bL32 (68 aa).

Belongs to the bacterial ribosomal protein bL32 family.

This chain is Large ribosomal subunit protein bL32, found in Onion yellows phytoplasma (strain OY-M).